Here is a 239-residue protein sequence, read N- to C-terminus: MAGDQELELRFDVPLYTLAEASRYLVVPRATLATWADGYERRPANAPAVQGQPIITALPHPTGSHARLPFVGIAEAYVLNAFRRAGVPMQRIRPSLDWLIKNVGPHALASQDLCTDGAEVLWRFAERSGEGSPDDLVVRGLIVPRSGQYVFKEIVEHYLQQISFADDNLASMIRLPQYGDANVVLDPRRGYGQPVFDGSGVRVADVLGPLRAGATFQAVADDYGVTPDQLRDALDAIAA.

Its function is as follows. Possibly the antitoxin component of a type II toxin-antitoxin (TA) system. Its cognate toxin is VapC45. In Mycobacterium tuberculosis (strain ATCC 25618 / H37Rv), this protein is Putative antitoxin VapB45.